We begin with the raw amino-acid sequence, 90 residues long: Small ribosomal subunit protein bS18B (90 aa).

Belongs to the bacterial ribosomal protein bS18 family. Part of the 30S ribosomal subunit. Forms a tight heterodimer with protein bS6.

Binds as a heterodimer with protein bS6 to the central domain of the 16S rRNA, where it helps stabilize the platform of the 30S subunit. The sequence is that of Small ribosomal subunit protein bS18B from Roseiflexus sp. (strain RS-1).